A 144-amino-acid polypeptide reads, in one-letter code: Ribonuclease VapC45 (144 aa).

Positions 7 and 102 each coordinate Mg(2+).

Belongs to the PINc/VapC protein family. Requires Mg(2+) as cofactor.

In terms of biological role, toxic component of a type II toxin-antitoxin (TA) system. An RNase. Its cognate antitoxin is VapB45. The protein is Ribonuclease VapC45 of Mycobacterium tuberculosis (strain CDC 1551 / Oshkosh).